The primary structure comprises 340 residues: Sulfotransferase ppzF (340 aa).

It participates in secondary metabolite biosynthesis. In terms of biological role, sulfotransferase; part of the gene cluster that mediates the biosynthesis of pyrrolopyrazines, secondary metabolites showing insecticidal activity. The role of ppzF within the pathway has still to be determined. The single multifunctional NRPS ppzA is sufficient to produce peramine via condensation of 1-pyrroline-5-carboxylate and arginine, N-methylation of the alpha-amino group of arginine and reduction of the thioester and the cyclization to form an iminium ion resulting in release from the peptide synthetase. Deprotonation of this intermediate and oxidation of the pyrroline ring would give rise to peramine. In Epichloe species that produce only peramine, the peramine synthetase gene is not localized in a gene cluster, in contrast to Metarhizium species that contain additional pyrrolopyrazine biosynthesis genes. The 2-oxoglutarate-Fe(II) type oxidoreductase ppzC hydroxylates peramine to yield the newly identified compound 8-hydroxyperamine whereas ppzD converts L-proline into trans-4-hydroxy-L-proline, a precursor of peramine biosynthesis. This chain is Sulfotransferase ppzF, found in Metarhizium majus (strain ARSEF 297).